Here is a 216-residue protein sequence, read N- to C-terminus: Ras-related protein Rab-11A (216 aa).

Glycine 2 is subject to N-acetylglycine. GTP contacts are provided by serine 20, glycine 21, valine 22, glycine 23, lysine 24, serine 25, asparagine 26, asparagine 37, leucine 38, serine 40, serine 42, and threonine 43. Serine 25 is a Mg(2+) binding site. Positions 36–47 match the Switch 1 motif; that stretch reads FNLESKSTIGVE. 2 residues coordinate Mg(2+): threonine 43 and aspartate 66. The short motif at 67–86 is the Switch 2 element; the sequence is TAGQERYRAITSAYYRGAVG. The GTP site is built by glycine 69, asparagine 124, lysine 125, aspartate 127, alanine 155, and leucine 156. The disordered stretch occupies residues 183 to 207; sequence DRRENDMSPSNNVVPIHVPPTTENK. S-geranylgeranyl cysteine attachment occurs at residues cysteine 212 and cysteine 213. A Cysteine methyl ester modification is found at cysteine 213. Positions 214–216 are cleaved as a propeptide — removed in mature form; that stretch reads QNI.

This sequence belongs to the small GTPase superfamily. Rab family. In terms of assembly, interacts (GTP-bound form) with RAB11FIPs (via their C-termini) including RAB11FIP1, RAB11FIP2, RAB11FIP3, RAB11FIP4 and RAB11FIP5 effectors. Forms a complex with RAB11FIP3 and dynein intermediate chain DYNC1LI1; the interaction between RAB11A1 and RAB11FIP3 is direct; the complex regulates endocytic trafficking. Interacts with EVI5; EVI5 and RAB11FIP3 may be mutually exclusive and compete for binding RAB11A. Interacts with SGSM1, SGSM2, SGSM3 and VIPAS39. Interacts with EXOC6 in a GTP-dependent manner. Interacts with RAB11FIP5. Interacts with STXBP6. Interacts (GDP-bound form) with ZFYVE27. Interacts with BIRC6/bruce. May interact with TBC1D14. Interacts with UNC119; in a cell cycle-dependent manner. GDP-bound and nucleotide-free forms interact with SH3BP5. Interacts (GDP-bound form) with KIF5A in a ZFYVE27-dependent manner. Interacts (GDP-bound form) with RELCH. Found in a complex composed of RELCH, OSBP1 and RAB11A. Interacts with TBC1D12. Interacts with DEF6. Interacts with ATP9A. Forms a heterotetramer with RAB11FIP3; the GTP-bound form is preferred for binding. Forms a complex with Rabin8/RAB3IP and RAB11FIP3, probably a heterohexamer with two of each protein subunit, where Rabin8/RAB3IP and RAB11FIP3 simultaneously bind to RAB11A; the complex promotes preciliary trafficking and cilia growth. Forms a complex containing RAB11A, ASAP1, Rabin8/RAB3IP, RAP11FIP3 and ARF4; the complex promotes preciliary trafficking; the complex binds to RHO in photoreceptor cells and promotes RHO ciliary transport. Interacts (GTP-bound form) with WDR44; the interaction prevents RAB11A-RAB3IP-RAB11FIP3 complex formation. Mg(2+) serves as cofactor.

It is found in the cell membrane. Its subcellular location is the endosome membrane. It localises to the recycling endosome membrane. The protein resides in the cleavage furrow. The protein localises to the cytoplasmic vesicle. It is found in the phagosome. Its subcellular location is the cytoplasmic vesicle membrane. It localises to the golgi apparatus. The protein resides in the trans-Golgi network. The catalysed reaction is GTP + H2O = GDP + phosphate + H(+). Its activity is regulated as follows. Regulated by guanine nucleotide exchange factors (GEFs) which promote the exchange of bound GDP for free GTP. Regulated by GTPase activating proteins (GAPs) which increase the GTP hydrolysis activity. Inhibited by GDP dissociation inhibitors (GDIs) which prevent Rab-GDP dissociation. The small GTPases Rab are key regulators of intracellular membrane trafficking, from the formation of transport vesicles to their fusion with membranes. Rabs cycle between an inactive GDP-bound form and an active GTP-bound form that is able to recruit to membranes different set of downstream effectors directly responsible for vesicle formation, movement, tethering and fusion. The small Rab GTPase RAB11A regulates endocytic recycling. Forms a functional Rab11/RAB11FIP3/dynein complex that regulates the movement of peripheral sorting endosomes (SE) along microtubule tracks toward the microtubule organizing center/centrosome, generating the endosomal recycling compartment (ERC). Acts as a major regulator of membrane delivery during cytokinesis. Together with MYO5B and RAB8A participates in epithelial cell polarization. Together with Rabin8/RAB3IP, RAB8A, the exocyst complex, PARD3, PRKCI, ANXA2, CDC42 and DNMBP promotes transcytosis of PODXL to the apical membrane initiation sites (AMIS), apical surface formation and lumenogenesis. Together with MYO5B participates in CFTR trafficking to the plasma membrane and TF (Transferrin) recycling in nonpolarized cells. Required in a complex with MYO5B and RAB11FIP2 for the transport of NPC1L1 to the plasma membrane. Participates in the sorting and basolateral transport of CDH1 from the Golgi apparatus to the plasma membrane. Regulates the recycling of FCGRT (receptor of Fc region of monomeric IgG) to basolateral membranes. May also play a role in melanosome transport and release from melanocytes. Promotes Rabin8/RAB3IP preciliary vesicular trafficking to mother centriole by forming a ciliary targeting complex containing Rab11, ASAP1, Rabin8/RAB3IP, RAB11FIP3 and ARF4, thereby regulating ciliogenesis initiation. On the contrary, upon LPAR1 receptor signaling pathway activation, interaction with phosphorylated WDR44 prevents Rab11-RAB3IP-RAB11FIP3 complex formation and cilia growth. Participates in the export of a subset of neosynthesized proteins through a Rab8-Rab10-Rab11-endososomal dependent export route via interaction with WDR44. The chain is Ras-related protein Rab-11A from Bos taurus (Bovine).